We begin with the raw amino-acid sequence, 775 residues long: Rab3 GTPase-activating protein catalytic subunit (775 aa).

S173, S330, S373, S375, and S384 each carry phosphoserine. Positions 324–351 are disordered; that stretch reads DEGKKTSPSDSMTKAYPADAGKAGGQLG. A disordered region spans residues 386–414; the sequence is AEDLRGNGQESTKKGGPKDMAPLKPEGRL. S458 is modified (phosphoserine).

The protein belongs to the Rab3-GAP catalytic subunit family. In terms of assembly, the Rab3 GTPase-activating complex is a heterodimer composed of Rab3gap1 and Rab3gap2. The Rab3 GTPase-activating complex interacts with DMXL2. Interacts with LMAN1.

The protein resides in the cytoplasm. Its subcellular location is the endoplasmic reticulum. It localises to the golgi apparatus. It is found in the cis-Golgi network. Functionally, catalytic subunit of the Rab3 GTPase-activating (Rab3GAP) complex composed of RAB3GAP1 and RAB3GAP2, which has GTPase-activating protein (GAP) activity towards various Rab3 subfamily members (RAB3A, RAB3B, RAB3C and RAB3D), RAB5A and RAB43, and guanine nucleotide exchange factor (GEF) activity towards RAB18. As part of the Rab3GAP complex, acts as a GAP for Rab3 proteins by converting active RAB3-GTP to the inactive form RAB3-GDP. Rab3 proteins are involved in regulated exocytosis of neurotransmitters and hormones. The Rab3GAP complex, acts as a GEF for RAB18 by promoting the conversion of inactive RAB18-GDP to the active form RAB18-GTP. Recruits and stabilizes RAB18 at the cis-Golgi membrane where RAB18 is most likely activated. Also involved in RAB18 recruitment at the endoplasmic reticulum (ER) membrane where it maintains proper ER structure. Required for normal eye and brain development. May participate in neurodevelopmental processes such as proliferation, migration and differentiation before synapse formation, and non-synaptic vesicular release of neurotransmitters. This is Rab3 GTPase-activating protein catalytic subunit from Rattus norvegicus (Rat).